The following is a 340-amino-acid chain: N-acetyl-gamma-glutamyl-phosphate reductase (340 aa).

Residue C146 is part of the active site.

Belongs to the NAGSA dehydrogenase family. Type 1 subfamily.

It is found in the cytoplasm. The catalysed reaction is N-acetyl-L-glutamate 5-semialdehyde + phosphate + NADP(+) = N-acetyl-L-glutamyl 5-phosphate + NADPH + H(+). It functions in the pathway amino-acid biosynthesis; L-arginine biosynthesis; N(2)-acetyl-L-ornithine from L-glutamate: step 3/4. Catalyzes the NADPH-dependent reduction of N-acetyl-5-glutamyl phosphate to yield N-acetyl-L-glutamate 5-semialdehyde. The polypeptide is N-acetyl-gamma-glutamyl-phosphate reductase (Streptococcus mutans serotype c (strain ATCC 700610 / UA159)).